Here is a 442-residue protein sequence, read N- to C-terminus: Probable carboxypeptidase PABG_01461 (442 aa).

An N-terminal signal peptide occupies residues 1–20 (MKLQYLVALLSVQAVPPVTA). Asparagine 102 carries an N-linked (GlcNAc...) asparagine glycan. Residue aspartate 160 coordinates Zn(2+). Glutamate 192 serves as the catalytic Proton acceptor. Residue glutamate 193 coordinates Zn(2+). N-linked (GlcNAc...) asparagine glycosylation occurs at asparagine 343.

This sequence belongs to the peptidase M20A family. Zn(2+) serves as cofactor.

It is found in the secreted. The protein is Probable carboxypeptidase PABG_01461 of Paracoccidioides brasiliensis (strain Pb03).